Reading from the N-terminus, the 252-residue chain is D-aminoacyl-tRNA deacylase (252 aa).

The protein belongs to the DtdA deacylase family. Monomer. The cofactor is Zn(2+).

It carries out the reaction a D-aminoacyl-tRNA + H2O = a tRNA + a D-alpha-amino acid + H(+). The enzyme catalyses glycyl-tRNA(Ala) + H2O = tRNA(Ala) + glycine + H(+). In terms of biological role, D-aminoacyl-tRNA deacylase with broad substrate specificity. By recycling D-aminoacyl-tRNA to D-amino acids and free tRNA molecules, this enzyme counteracts the toxicity associated with the formation of D-aminoacyl-tRNA entities in vivo. This chain is D-aminoacyl-tRNA deacylase, found in Pyrobaculum islandicum (strain DSM 4184 / JCM 9189 / GEO3).